We begin with the raw amino-acid sequence, 110 residues long: UPF0102 protein HH_1751 (110 aa).

The protein belongs to the UPF0102 family.

The polypeptide is UPF0102 protein HH_1751 (Helicobacter hepaticus (strain ATCC 51449 / 3B1)).